We begin with the raw amino-acid sequence, 398 residues long: Type II secretion system protein L (398 aa).

The Cytoplasmic portion of the chain corresponds to 1-248 (MNNHHTSSAA…RQPTPRRWRP (248 aa)). A helical membrane pass occupies residues 249-265 (VIVAALALLLLWSSNCL). Topologically, residues 266–398 (HDHLMLGQQA…GRLTLEGNDA (133 aa)) are periplasmic.

This sequence belongs to the GSP L family. Type II secretion system is composed of four main components: the outer membrane complex, the inner membrane complex, the cytoplasmic secretion ATPase and the periplasm-spanning pseudopilus. Forms homodimers. Interacts with PulM/GspM. Interacts with PulE/GspE and PulF/GspF.

The protein localises to the cell inner membrane. Its function is as follows. Inner membrane component of the type II secretion system required for the energy-dependent secretion of extracellular factors such as proteases and toxins from the periplasm. Plays a role in the complex assembly and recruits PulM resulting in a stable complex in the inner membrane. Provides thus a link between the energy-providing PulE protein in the cytoplasm and the rest of the T2SS machinery. This Klebsiella pneumoniae protein is Type II secretion system protein L (pulL).